The sequence spans 216 residues: Probable transaldolase (216 aa).

The active-site Schiff-base intermediate with substrate is the lysine 83.

The protein belongs to the transaldolase family. Type 3B subfamily.

The protein localises to the cytoplasm. It catalyses the reaction D-sedoheptulose 7-phosphate + D-glyceraldehyde 3-phosphate = D-erythrose 4-phosphate + beta-D-fructose 6-phosphate. It participates in carbohydrate degradation; pentose phosphate pathway; D-glyceraldehyde 3-phosphate and beta-D-fructose 6-phosphate from D-ribose 5-phosphate and D-xylulose 5-phosphate (non-oxidative stage): step 2/3. Transaldolase is important for the balance of metabolites in the pentose-phosphate pathway. The protein is Probable transaldolase of Sorangium cellulosum (strain So ce56) (Polyangium cellulosum (strain So ce56)).